Consider the following 159-residue polypeptide: Transcription antitermination protein NusB (159 aa).

The disordered stretch occupies residues 1–20 (MNKNTQGKPSGKPVRRDGVD).

This sequence belongs to the NusB family.

Involved in transcription antitermination. Required for transcription of ribosomal RNA (rRNA) genes. Binds specifically to the boxA antiterminator sequence of the ribosomal RNA (rrn) operons. The sequence is that of Transcription antitermination protein NusB from Stenotrophomonas maltophilia (strain R551-3).